A 416-amino-acid chain; its full sequence is GTPase ERA1, chloroplastic (416 aa).

The N-terminal 53 residues, 1–53, are a transit peptide targeting the chloroplast; that stretch reads MELGLALRLVAPPPLLPCLSRRALSLPPDFVSSRVLRGRRIHASRLKHGAGVV. An Era-type G domain is found at 117–287; the sequence is RSGYVAVLGK…KEWILSKLPL (171 aa). A G1 region spans residues 125 to 132; sequence GKPNVGKS. Position 125–132 (125–132) interacts with GTP; that stretch reads GKPNVGKS. Residues 151-155 are G2; the sequence is QTTRH. The G3 stretch occupies residues 172-175; it reads DTPG. Residues 172-176 and 237-240 each bind GTP; these read DTPGV and NKKD. A G4 region spans residues 237 to 240; sequence NKKD. The tract at residues 266-268 is G5; it reads ISA. Positions 318-395 constitute a KH type-2 domain; the sequence is YRQEIPYSCQ…YLEVEVKVKE (78 aa).

The protein belongs to the TRAFAC class TrmE-Era-EngA-EngB-Septin-like GTPase superfamily. Era GTPase family.

Its subcellular location is the plastid. It is found in the chloroplast stroma. It localises to the chloroplast nucleoid. Functionally, nuclear genome-encoded probable GTPase involved in ribosome biogenesis in chloroplasts. Plays a role in 16S rRNA maturation in plastids and may contribute to the assembly of the small (30S) ribosomal subunit. In Zea mays (Maize), this protein is GTPase ERA1, chloroplastic.